Consider the following 382-residue polypeptide: G-box-binding factor 3 (382 aa).

A compositionally biased stretch (basic and acidic residues) spans 1–16 (MGNSSEEPKPPTKSDK). Disordered regions lie at residues 1–26 (MGNSSEEPKPPTKSDKPSSPPVDQTN), 97–221 (MGSL…GVKL), and 257–285 (ERELKRERRKQSNRESARRSRLRKQAETE). Polar residues predominate over residues 111–130 (TPGTLLSIDTPTKSTGNTDN). Positions 155 to 165 (ADEHKRSRNSS) are enriched in basic and acidic residues. Low complexity predominate over residues 166–181 (ETDGSTDGSDGNTTGA). Residues 182–199 (DEPKLKRSREGTPTKDGK) are compositionally biased toward basic and acidic residues. The span at 202–216 (VQASSFHSVSPSSGD) shows a compositional bias: polar residues. The bZIP domain maps to 259–322 (ELKRERRKQS…DKLRGANATL (64 aa)). The basic motif stretch occupies residues 261 to 280 (KRERRKQSNRESARRSRLRK). A leucine-zipper region spans residues 287–322 (LARKVEALTAENMALRSELNQLNEKSDKLRGANATL). Positions 329–382 (SEPEKRVPANMLSRVKNSGAGDKNKNQGDNDSNSTSKLHQLLDTKPRAKAVAAG) are disordered. Residues 357–366 (DNDSNSTSKL) show a composition bias toward polar residues.

Belongs to the bZIP family. As to quaternary structure, DNA-binding heterodimer. Interacts with GBF4. Interacts with BZIP16 and BZIP68. In terms of tissue distribution, present only in dark grown leaves and roots.

Its subcellular location is the nucleus. Binds to the G-box motif (5'-CCACGTGG-3') of the rbcS-1A gene promoter. G-box and G-box-like motifs are cis-acting elements defined in promoters of certain plant genes which are regulated by such diverse stimuli as light-induction or hormone control. This chain is G-box-binding factor 3 (GBF3), found in Arabidopsis thaliana (Mouse-ear cress).